We begin with the raw amino-acid sequence, 333 residues long: MRTKRVFHAVDSHTEGMPTRVITGGVGVIPGSTMAERREHFLAEMDHVRTLLMYEPRGHSAMSGAILQPPTRPDADYGVLYIEVSGCLPMCGHGTIGVATVLVETGMVEVVEPVTTIRLDTPAGLVVAEVRVEDGAATAVTITNVPSFSAGLDRTVKVPGIGEVTYDLAYGGNFYAILPIESVGLPFDRAHKQQILDAGLAIMDAINEQDEPVHPLDAGIRGCHHVQFTAPGSDARHSRHAMAIHPGWFDRSPCGTGTSARMAQLHARGELPLDTDFVNESFIGTRFVGRLVEETEVTDLPAVVPTITGRAWVTGTAQYFLDPRDPFPEGFLL.

Catalysis depends on cysteine 91, which acts as the Proton acceptor. Residues glycine 92–histidine 93, histidine 225, and aspartate 250 contribute to the substrate site. Residue cysteine 254 is the Proton donor of the active site. Position 255 to 256 (glycine 255 to threonine 256) interacts with substrate.

Belongs to the proline racemase family.

It catalyses the reaction trans-4-hydroxy-L-proline = cis-4-hydroxy-D-proline. Catalyzes the epimerization of trans-4-hydroxy-L-proline (t4LHyp) to cis-4-hydroxy-D-proline (c4DHyp). Is likely involved in a degradation pathway that converts t4LHyp to alpha-ketoglutarate. Displays no proline racemase activity. In Streptosporangium roseum (strain ATCC 12428 / DSM 43021 / JCM 3005 / KCTC 9067 / NCIMB 10171 / NRRL 2505 / NI 9100), this protein is 4-hydroxyproline 2-epimerase.